Consider the following 312-residue polypeptide: Ubiquinone biosynthesis O-methyltransferase, mitochondrial (312 aa).

The transit peptide at 1 to 32 (MLLRSRFLKVIHVRKQLSACSRFAIQTQTRCK) directs the protein to the mitochondrion. Residues Arg68, Gly130, Asp153, and Met196 each coordinate S-adenosyl-L-methionine. Positions 197, 200, and 201 each coordinate Mg(2+).

This sequence belongs to the class I-like SAM-binding methyltransferase superfamily. UbiG/COQ3 family. In terms of assembly, component of a multi-subunit COQ enzyme complex, composed of at least COQ3, COQ4, COQ5, COQ6, COQ7 and COQ9. Interacts directly with COQ4. It depends on Mg(2+) as a cofactor.

The protein localises to the mitochondrion inner membrane. It catalyses the reaction 3,4-dihydroxy-5-(all-trans-hexaprenyl)benzoate + S-adenosyl-L-methionine = 4-hydroxy-3-methoxy-5-(all-trans-hexaprenyl)benzoate + S-adenosyl-L-homocysteine + H(+). It carries out the reaction a 3-demethylubiquinone + S-adenosyl-L-methionine = a ubiquinone + S-adenosyl-L-homocysteine. The enzyme catalyses 3-demethylubiquinol-6 + S-adenosyl-L-methionine = ubiquinol-6 + S-adenosyl-L-homocysteine + H(+). The protein operates within cofactor biosynthesis; ubiquinone biosynthesis. Regulated in response to catabolite repression. Functionally, O-methyltransferase required for two non-consecutive steps during ubiquinone biosynthesis. Catalyzes the 2 O-methylation of 3,4-dihydroxy-5-(all-trans-hexaprenyl)benzoic acid into 4-hydroxy-3-methoxy-5-(all-trans-hexaprenyl)benzoic acid. Also catalyzes the last step of ubiquinone biosynthesis by mediating methylation of 3-demethylubiquinone into ubiquinone. Also able to mediate the methylation of 3-demethylubiquinol-6 into ubiquinol-6. The chain is Ubiquinone biosynthesis O-methyltransferase, mitochondrial from Saccharomyces cerevisiae (strain ATCC 204508 / S288c) (Baker's yeast).